A 302-amino-acid chain; its full sequence is MSVNLSLHPRSVPEPRALLELIQPITWFPPIWAYLCGTVSVGIWPGEKWPLVLLGMVLAGPLVCGMSQAANNWCDRHVDAVNEPDRPIPSGRIPGRWGLYIALLMTVLSLAVGWMLGPWGFGATVFGVLAAWAYSVEPIRLKRSGWWGPGLVALCYEGLPWFTGAAVLSAGAPSFFIVTVALLYAFGAHGIMTLNDFKALEGDRQHGVRSLPVMLGPEVAAKLACTVMAMAQILVITLLVIWGKPIHAGIITALLVAQLFAMRVLLRDPAGKCPWYNGTGVTLYVLGMMVAAFAIRGLEVLP.

Helical transmembrane passes span I25 to P45, W49 to A69, W97 to G117, W119 to I139, G145 to A165, A166 to F186, L223 to G243, I246 to L266, and W275 to I295.

It is found in the cell membrane. It participates in porphyrin-containing compound metabolism; bacteriochlorophyll biosynthesis (light-independent). Catalyzes the esterification of bacteriochlorophyllide a by geranylgeraniol-PPi. The polypeptide is Bacteriochlorophyll synthase 33 kDa chain (bchG) (Cereibacter sphaeroides (strain ATCC 17023 / DSM 158 / JCM 6121 / CCUG 31486 / LMG 2827 / NBRC 12203 / NCIMB 8253 / ATH 2.4.1.) (Rhodobacter sphaeroides)).